A 647-amino-acid polypeptide reads, in one-letter code: ATP-binding protein Uup (647 aa).

ABC transporter domains lie at 1-253 (MALI…RVEA) and 320-546 (FEME…AKAK). ATP is bound by residues 36–43 (GRNGAGKS) and 352–359 (GPNGCGKT). Residues 545–563 (AKKSEPLKEESAVKNDRTS) are compositionally biased toward basic and acidic residues. The interval 545–569 (AKKSEPLKEESAVKNDRTSKPKSVK) is disordered. Residues 559–647 (NDRTSKPKSV…EKKNLVEGKA (89 aa)) are C-terminal domain (CTD), binds DNA.

The protein belongs to the ABC transporter superfamily. ABCF family. Uup subfamily.

It localises to the cytoplasm. It carries out the reaction ATP + H2O = ADP + phosphate + H(+). Its function is as follows. Probably plays a role in ribosome assembly or function. May be involved in resolution of branched DNA intermediates that result from template switching in postreplication gaps. Binds DNA and has ATPase activity. This chain is ATP-binding protein Uup, found in Haemophilus influenzae (strain ATCC 51907 / DSM 11121 / KW20 / Rd).